Here is a 301-residue protein sequence, read N- to C-terminus: Acetylglutamate kinase (301 aa).

Substrate contacts are provided by residues 71 to 72 (GG), R93, and N198.

The protein belongs to the acetylglutamate kinase family. ArgB subfamily.

Its subcellular location is the cytoplasm. The catalysed reaction is N-acetyl-L-glutamate + ATP = N-acetyl-L-glutamyl 5-phosphate + ADP. The protein operates within amino-acid biosynthesis; L-arginine biosynthesis; N(2)-acetyl-L-ornithine from L-glutamate: step 2/4. Its function is as follows. Catalyzes the ATP-dependent phosphorylation of N-acetyl-L-glutamate. In Zymomonas mobilis subsp. mobilis (strain ATCC 31821 / ZM4 / CP4), this protein is Acetylglutamate kinase.